The primary structure comprises 223 residues: Endonuclease V (223 aa).

Mg(2+)-binding residues include Asp45 and Asp113.

Belongs to the endonuclease V family. It depends on Mg(2+) as a cofactor.

Its subcellular location is the cytoplasm. It carries out the reaction Endonucleolytic cleavage at apurinic or apyrimidinic sites to products with a 5'-phosphate.. In terms of biological role, DNA repair enzyme involved in the repair of deaminated bases. Selectively cleaves double-stranded DNA at the second phosphodiester bond 3' to a deoxyinosine leaving behind the intact lesion on the nicked DNA. In Dehalococcoides mccartyi (strain ATCC BAA-2100 / JCM 16839 / KCTC 5957 / BAV1), this protein is Endonuclease V.